A 344-amino-acid polypeptide reads, in one-letter code: Geranylgeranyl transferase type-2 subunit alpha (344 aa).

PFTA repeat units follow at residues 44–78, 89–123, 125–159, 165–199, 214–248, and 266–293; these read YSEGNLKLTTELLDWNPETYSVWNYRREILLNDVF, LLDNELKYVLSKMKVFPKVYWIFNHRRWCLENAPY, NWNYEMMITEKLLSADARNFHGWHYRRYVVSQIER, LAKKEMEYTTSAIATNFSNFSALHNRTKLIETILN, ILEQELDMIHQAVFTDPDDSSVWIYHRWLMGHCNP, and YLQKEIELIQELHEMEPENRWCCESLVN.

The protein belongs to the protein prenyltransferase subunit alpha family. Heterodimer of an alpha and a beta subunit.

The enzyme catalyses geranylgeranyl diphosphate + L-cysteinyl-[protein] = S-geranylgeranyl-L-cysteinyl-[protein] + diphosphate. In terms of biological role, catalyzes the transfer of a geranyl-geranyl moiety from geranyl-geranyl pyrophosphate to proteins having the C-terminal-XCC or -XCXC, where both cysteines may become modified. This is Geranylgeranyl transferase type-2 subunit alpha (bet4) from Schizosaccharomyces pombe (strain 972 / ATCC 24843) (Fission yeast).